A 472-amino-acid polypeptide reads, in one-letter code: UDP-glucuronosyltransferase (472 aa).

3 N-linked (GlcNAc...) asparagine glycosylation sites follow: asparagine 59, asparagine 227, and asparagine 377. The chain crosses the membrane as a helical span at residues 436 to 456; that stretch reads FGFILLILLTVLWVTLKCCLF.

Belongs to the UDP-glycosyltransferase family.

It is found in the microsome membrane. It localises to the endoplasmic reticulum membrane. The catalysed reaction is glucuronate acceptor + UDP-alpha-D-glucuronate = acceptor beta-D-glucuronoside + UDP + H(+). Functionally, UDPGT is of major importance in the conjugation and subsequent elimination of potentially toxic xenobiotics and endogenous compounds. The sequence is that of UDP-glucuronosyltransferase (ugt3) from Pleuronectes platessa (European plaice).